We begin with the raw amino-acid sequence, 703 residues long: Arylphorin subunit beta (703 aa).

The N-terminal stretch at 1-16 (MKTVIILAGLVALALG) is a signal peptide. Asparagine 72 and asparagine 211 each carry an N-linked (GlcNAc...) asparagine glycan.

Belongs to the hemocyanin family. As to quaternary structure, arylphorin is a hexamer of subunits alpha and beta. Fat body.

The protein resides in the secreted. It localises to the extracellular space. In terms of biological role, arylphorin is a larval storage protein (LSP) which may serve as a storage protein used primarily as a source of aromatic amino acids for protein synthesis during metamorphosis. It is a constituent of the sclerotizing system of the cuticle, and serves as a carrier for ecdysteroid hormone. This Manduca sexta (Tobacco hawkmoth) protein is Arylphorin subunit beta.